A 199-amino-acid polypeptide reads, in one-letter code: Fe/S biogenesis protein NfuA (199 aa).

Cysteine 151 and cysteine 154 together coordinate [4Fe-4S] cluster.

It belongs to the NfuA family. In terms of assembly, homodimer. [4Fe-4S] cluster is required as a cofactor.

Its function is as follows. Involved in iron-sulfur cluster biogenesis. Binds a 4Fe-4S cluster, can transfer this cluster to apoproteins, and thereby intervenes in the maturation of Fe/S proteins. Could also act as a scaffold/chaperone for damaged Fe/S proteins. This Stenotrophomonas maltophilia (strain K279a) protein is Fe/S biogenesis protein NfuA.